The primary structure comprises 450 residues: tRNA modification GTPase MnmE (450 aa).

(6S)-5-formyl-5,6,7,8-tetrahydrofolate is bound by residues Arg-23, Glu-79, and Lys-118. The TrmE-type G domain occupies 214-374 (GITLILVGKP…LKEHILNKVG (161 aa)). A K(+)-binding site is contributed by Asn-224. GTP-binding positions include 224–229 (NAGKSS), 243–249 (TSIAGTT), and 268–271 (DTAG). Ser-228 contributes to the Mg(2+) binding site. 3 residues coordinate K(+): Thr-243, Ile-245, and Thr-248. Thr-249 is a binding site for Mg(2+). Residue Lys-450 participates in (6S)-5-formyl-5,6,7,8-tetrahydrofolate binding.

The protein belongs to the TRAFAC class TrmE-Era-EngA-EngB-Septin-like GTPase superfamily. TrmE GTPase family. Homodimer. Heterotetramer of two MnmE and two MnmG subunits. K(+) serves as cofactor.

The protein resides in the cytoplasm. Functionally, exhibits a very high intrinsic GTPase hydrolysis rate. Involved in the addition of a carboxymethylaminomethyl (cmnm) group at the wobble position (U34) of certain tRNAs, forming tRNA-cmnm(5)s(2)U34. In Francisella tularensis subsp. novicida (strain U112), this protein is tRNA modification GTPase MnmE.